Reading from the N-terminus, the 208-residue chain is Protein-L-isoaspartate O-methyltransferase (208 aa).

Residue serine 59 is part of the active site.

It belongs to the methyltransferase superfamily. L-isoaspartyl/D-aspartyl protein methyltransferase family.

It localises to the cytoplasm. It catalyses the reaction [protein]-L-isoaspartate + S-adenosyl-L-methionine = [protein]-L-isoaspartate alpha-methyl ester + S-adenosyl-L-homocysteine. Its function is as follows. Catalyzes the methyl esterification of L-isoaspartyl residues in peptides and proteins that result from spontaneous decomposition of normal L-aspartyl and L-asparaginyl residues. It plays a role in the repair and/or degradation of damaged proteins. This chain is Protein-L-isoaspartate O-methyltransferase, found in Serratia proteamaculans (strain 568).